Reading from the N-terminus, the 447-residue chain is 3-phosphoshikimate 1-carboxyvinyltransferase (447 aa).

Lysine 36, serine 37, and arginine 41 together coordinate 3-phosphoshikimate. Residue lysine 36 coordinates phosphoenolpyruvate. Phosphoenolpyruvate contacts are provided by glycine 109 and arginine 138. Residues serine 183, glutamine 185, aspartate 333, and lysine 360 each coordinate 3-phosphoshikimate. Glutamine 185 serves as a coordination point for phosphoenolpyruvate. Aspartate 333 serves as the catalytic Proton acceptor. Residues arginine 364 and arginine 406 each contribute to the phosphoenolpyruvate site.

This sequence belongs to the EPSP synthase family. In terms of assembly, monomer.

Its subcellular location is the cytoplasm. The enzyme catalyses 3-phosphoshikimate + phosphoenolpyruvate = 5-O-(1-carboxyvinyl)-3-phosphoshikimate + phosphate. It participates in metabolic intermediate biosynthesis; chorismate biosynthesis; chorismate from D-erythrose 4-phosphate and phosphoenolpyruvate: step 6/7. In terms of biological role, catalyzes the transfer of the enolpyruvyl moiety of phosphoenolpyruvate (PEP) to the 5-hydroxyl of shikimate-3-phosphate (S3P) to produce enolpyruvyl shikimate-3-phosphate and inorganic phosphate. The chain is 3-phosphoshikimate 1-carboxyvinyltransferase from Synechocystis sp. (strain ATCC 27184 / PCC 6803 / Kazusa).